The sequence spans 232 residues: Polycomb group RING finger protein 5-B (232 aa).

Residues 18–57 (CFVCKGYLIKPTTVTECLHTFCKSCIVQHFEDSNDCPKCG) form an RING-type zinc finger. The span at 93–104 (QEDEFWRRKESN) shows a compositional bias: basic and acidic residues. The disordered stretch occupies residues 93–128 (QEDEFWRRKESNDENGPMCKKRRVDEEDDDKGDGDY).

In terms of assembly, component of a PRC1-like complex.

It localises to the nucleus. In terms of biological role, component of Polycomb group (PcG) multiprotein complexes; the complex class is required to maintain the transcriptionally repressive state of some genes. The protein is Polycomb group RING finger protein 5-B (pcgf5b) of Danio rerio (Zebrafish).